Here is a 487-residue protein sequence, read N- to C-terminus: ATP synthase subunit beta 1 (487 aa).

162–169 (GGAGVGKT) is an ATP binding site.

The protein belongs to the ATPase alpha/beta chains family. In terms of assembly, F-type ATPases have 2 components, CF(1) - the catalytic core - and CF(0) - the membrane proton channel. CF(1) has five subunits: alpha(3), beta(3), gamma(1), delta(1), epsilon(1). CF(0) has three main subunits: a(1), b(2) and c(9-12). The alpha and beta chains form an alternating ring which encloses part of the gamma chain. CF(1) is attached to CF(0) by a central stalk formed by the gamma and epsilon chains, while a peripheral stalk is formed by the delta and b chains.

The protein resides in the cell inner membrane. The enzyme catalyses ATP + H2O + 4 H(+)(in) = ADP + phosphate + 5 H(+)(out). Produces ATP from ADP in the presence of a proton gradient across the membrane. The catalytic sites are hosted primarily by the beta subunits. The sequence is that of ATP synthase subunit beta 1 from Gluconobacter oxydans (strain 621H) (Gluconobacter suboxydans).